A 316-amino-acid chain; its full sequence is Prenytransferase adrG (316 aa).

7 helical membrane-spanning segments follow: residues 36–56, 60–80, 131–151, 163–183, 191–211, 247–267, and 294–314; these read LLGF…CASI, KIPI…SIFL, VLIY…FFAL, PQIT…SLGL, PTVC…VIYS, GFLA…VVSV, and KSAF…EYCL.

It belongs to the UbiA prenyltransferase family. Mg(2+) serves as cofactor.

It localises to the membrane. The enzyme catalyses 3,5-dimethylorsellinate + (2E,6E)-farnesyl diphosphate = (3R)-3-farnesyl-6-hydroxy-2,3,5-trimethyl-4-oxocyclohexa-1,5-diene-1-carboxylate + diphosphate + H(+). The protein operates within secondary metabolite biosynthesis; terpenoid biosynthesis. Its function is as follows. Prenytransferase; part of the gene cluster that mediates the biosynthesis of andrastins, meroterpenoid compounds that exhibit inhibitory activity against ras farnesyltransferase, suggesting that they could be promising leads for antitumor agents. The first step of the pathway is the synthesis of 3,5-dimethylorsellinic acid (DMOA) by the polyketide synthase adrD via condensation of one acetyl-CoA starter unit with 3 malonyl-CoA units and 2 methylations. DMAO is then converted to farnesyl-DMAO by the prenyltransferase adrG. The methyltransferase adrK catalyzes the methylation of the carboxyl group of farnesyl-DMAO to farnesyl-DMAO methyl ester which is further converted to epoxyfarnesyl-DMAO methyl ester by the FAD-dependent monooxygenase adrH. The terpene cyclase adrI then catalyzes the carbon skeletal rearrangement to generate the andrastin E, the first compound in the pathway having the andrastin scaffold, with the tetracyclic ring system. The post-cyclization tailoring enzymes adrF, adrE, adrJ, and adrA, are involved in the conversion of andrastin E into andrastin A. The short chain dehydrogenase adrF is responsible for the oxidation of the C-3 a hydroxyl group of andrastin E to yield the corresponding ketone, andrastin D. The ketoreductase adrE stereoselectively reduces the carbonyl moiety to reverse the stereochemistry of the C-3 position to yield andrastin F. The acetyltransferase adrJ is the acetyltransferase that attaches the acetyl group to the C-3 hydroxyl group of andrastin F to yield andrastin C. Finally, the cytochrome P450 monooxygenase adrA catalyzes two sequential oxidation reactions of the C-23 methyl group, to generate the corresponding alcohol andrastin B, and aldehyde andrastin A. The chain is Prenytransferase adrG from Penicillium roqueforti.